The chain runs to 350 residues: Methionine import ATP-binding protein MetN (350 aa).

The 240-residue stretch at 2-241 (IQIKNLKKEY…PQAPVTRSFV (240 aa)) folds into the ABC transporter domain. ATP is bound at residue 38–45 (GHSGAGKS).

The protein belongs to the ABC transporter superfamily. Methionine importer (TC 3.A.1.24) family. As to quaternary structure, the complex is composed of two ATP-binding proteins (MetN), two transmembrane proteins (MetI) and a solute-binding protein (MetQ).

Its subcellular location is the cell inner membrane. It carries out the reaction L-methionine(out) + ATP + H2O = L-methionine(in) + ADP + phosphate + H(+). It catalyses the reaction D-methionine(out) + ATP + H2O = D-methionine(in) + ADP + phosphate + H(+). Functionally, part of the ABC transporter complex MetNIQ involved in methionine import. Responsible for energy coupling to the transport system. The polypeptide is Methionine import ATP-binding protein MetN (Francisella tularensis subsp. tularensis (strain FSC 198)).